We begin with the raw amino-acid sequence, 233 residues long: N-(5'-phosphoribosyl)anthranilate isomerase (233 aa).

The protein belongs to the TrpF family.

It catalyses the reaction N-(5-phospho-beta-D-ribosyl)anthranilate = 1-(2-carboxyphenylamino)-1-deoxy-D-ribulose 5-phosphate. It participates in amino-acid biosynthesis; L-tryptophan biosynthesis; L-tryptophan from chorismate: step 3/5. In Synechococcus sp. (strain JA-2-3B'a(2-13)) (Cyanobacteria bacterium Yellowstone B-Prime), this protein is N-(5'-phosphoribosyl)anthranilate isomerase.